A 243-amino-acid polypeptide reads, in one-letter code: 3-deoxy-manno-octulosonate cytidylyltransferase (243 aa).

Belongs to the KdsB family.

The protein resides in the cytoplasm. It carries out the reaction 3-deoxy-alpha-D-manno-oct-2-ulosonate + CTP = CMP-3-deoxy-beta-D-manno-octulosonate + diphosphate. The protein operates within nucleotide-sugar biosynthesis; CMP-3-deoxy-D-manno-octulosonate biosynthesis; CMP-3-deoxy-D-manno-octulosonate from 3-deoxy-D-manno-octulosonate and CTP: step 1/1. It functions in the pathway bacterial outer membrane biogenesis; lipopolysaccharide biosynthesis. Its function is as follows. Activates KDO (a required 8-carbon sugar) for incorporation into bacterial lipopolysaccharide in Gram-negative bacteria. This chain is 3-deoxy-manno-octulosonate cytidylyltransferase, found in Helicobacter pylori (strain G27).